The chain runs to 97 residues: Type VII secretion system extracellular protein A (97 aa).

The stretch at 61-93 (KVEKFAQLLEEIKQQLNSTADAVQEQDQQLSNN) forms a coiled coil.

The protein belongs to the WXG100 family. sagEsxA-like subfamily. As to quaternary structure, forms both homodimers and heterodimers with EsxC.

Its subcellular location is the secreted. Its function is as follows. Virulence factor that is important for the establishment of infection in the host. EsxA is required for EsxB synthesis as well as secretion. Modulates host cell apoptotic pathways and mediates together with EsxB the release of S.aureus from the host cell. By acting on apoptosis, plays a role in the modulation of dendritic cell-mediated immunity. This chain is Type VII secretion system extracellular protein A, found in Staphylococcus aureus (strain USA300).